The sequence spans 436 residues: GTPase Der (436 aa).

2 consecutive EngA-type G domains span residues 4–167 (PVVA…PKEE) and 176–351 (VKFS…DNHS). Residues 10-17 (GRPNVGKS), 57-61 (DTGGI), 119-122 (NKVD), 182-189 (GRPNVGKS), 229-233 (DTAGM), and 294-297 (NKWD) each bind GTP. Positions 352 to 436 (LRVQSSMLND…PIRVIARKRK (85 aa)) constitute a KH-like domain.

It belongs to the TRAFAC class TrmE-Era-EngA-EngB-Septin-like GTPase superfamily. EngA (Der) GTPase family. In terms of assembly, associates with the 50S ribosomal subunit.

In terms of biological role, GTPase that plays an essential role in the late steps of ribosome biogenesis. This chain is GTPase Der, found in Listeria welshimeri serovar 6b (strain ATCC 35897 / DSM 20650 / CCUG 15529 / CIP 8149 / NCTC 11857 / SLCC 5334 / V8).